The chain runs to 192 residues: Probable nicotinate-nucleotide adenylyltransferase (192 aa).

It belongs to the NadD family.

The catalysed reaction is nicotinate beta-D-ribonucleotide + ATP + H(+) = deamido-NAD(+) + diphosphate. Its pathway is cofactor biosynthesis; NAD(+) biosynthesis; deamido-NAD(+) from nicotinate D-ribonucleotide: step 1/1. Its function is as follows. Catalyzes the reversible adenylation of nicotinate mononucleotide (NaMN) to nicotinic acid adenine dinucleotide (NaAD). In Shouchella clausii (strain KSM-K16) (Alkalihalobacillus clausii), this protein is Probable nicotinate-nucleotide adenylyltransferase.